The primary structure comprises 160 residues: MSTLKKPDLTDTKLRAKLAKGMGHNYYGEPAWPNDLLYIFPVVILGTIACVVGLAVLDPAFLGDKANPFATPLEILPEWYLYPVFQILRVVPNKLLGIALQTLIPLGLMILPFIENINKFANPFRRPVAMSLFLFGTVLTMYLGIGACLPIDKSLTLGLF.

The next 3 membrane-spanning stretches (helical) occupy residues 36 to 56 (LLYIFPVVILGTIACVVGLAV), 95 to 115 (LLGIALQTLIPLGLMILPFIE), and 131 to 151 (SLFLFGTVLTMYLGIGACLPI).

It belongs to the cytochrome b family. PetD subfamily. As to quaternary structure, the 4 large subunits of the cytochrome b6-f complex are cytochrome b6, subunit IV (17 kDa polypeptide, PetD), cytochrome f and the Rieske protein, while the 4 small subunits are PetG, PetL, PetM and PetN. The complex functions as a dimer.

Its subcellular location is the cellular thylakoid membrane. Its function is as follows. Component of the cytochrome b6-f complex, which mediates electron transfer between photosystem II (PSII) and photosystem I (PSI), cyclic electron flow around PSI, and state transitions. This chain is Cytochrome b6-f complex subunit 4, found in Prochlorococcus marinus (strain NATL2A).